The chain runs to 539 residues: Alpha-aminoadipic semialdehyde dehydrogenase (539 aa).

Residues 1–26 (MWRVPGLLCVRVARKSKFSGSWNRPA) constitute a mitochondrion transit peptide. N6-acetyllysine; alternate is present on Lys94. Position 94 is an N6-succinyllysine; alternate (Lys94). NAD(+) is bound by residues 192 to 194 (TAF), Lys218, 258 to 259 (GT), 274 to 275 (GS), 274 to 279 (GSTQVG), and 296 to 297 (EL). The active-site Proton acceptor is the Glu296. Cys330 acts as the Nucleophile in catalysis. Thr331 is a (S)-2-amino-6-oxohexanoate binding site. Residue Glu427 coordinates NAD(+). Lys462 carries the post-translational modification N6-acetyllysine. Positions 489 and 490 each coordinate (S)-2-amino-6-oxohexanoate. Position 500 is an N6-acetyllysine (Lys500). Lys537 is subject to N6-succinyllysine.

It belongs to the aldehyde dehydrogenase family. In terms of assembly, homotetramer.

The protein resides in the cytoplasm. It is found in the cytosol. The protein localises to the nucleus. It localises to the mitochondrion. The catalysed reaction is nonanal + NAD(+) + H2O = nonanoate + NADH + 2 H(+). It carries out the reaction (S)-2-amino-6-oxohexanoate + NAD(+) + H2O = L-2-aminoadipate + NADH + 2 H(+). The enzyme catalyses betaine aldehyde + NAD(+) + H2O = glycine betaine + NADH + 2 H(+). It catalyses the reaction an aldehyde + NAD(+) + H2O = a carboxylate + NADH + 2 H(+). The catalysed reaction is hexanal + NAD(+) + H2O = hexanoate + NADH + 2 H(+). It carries out the reaction octanal + NAD(+) + H2O = octanoate + NADH + 2 H(+). The enzyme catalyses (E)-non-2-enal + NAD(+) + H2O = (E)-non-2-enoate + NADH + 2 H(+). It catalyses the reaction (E)-4-hydroxynon-2-enal + NAD(+) + H2O = (E)-4-hydroxynon-2-enoate + NADH + 2 H(+). The protein operates within amine and polyamine biosynthesis; betaine biosynthesis via choline pathway; betaine from betaine aldehyde: step 1/1. Functionally, multifunctional enzyme mediating important protective effects. Metabolizes betaine aldehyde to betaine, an important cellular osmolyte and methyl donor. Protects cells from oxidative stress by metabolizing a number of lipid peroxidation-derived aldehydes. Involved in lysine catabolism. The protein is Alpha-aminoadipic semialdehyde dehydrogenase (ALDH7A1) of Bos taurus (Bovine).